Here is a 245-residue protein sequence, read N- to C-terminus: 1-(5-phosphoribosyl)-5-[(5-phosphoribosylamino)methylideneamino] imidazole-4-carboxamide isomerase (245 aa).

The Proton acceptor role is filled by D7. D129 acts as the Proton donor in catalysis.

Belongs to the HisA/HisF family.

It is found in the cytoplasm. The enzyme catalyses 1-(5-phospho-beta-D-ribosyl)-5-[(5-phospho-beta-D-ribosylamino)methylideneamino]imidazole-4-carboxamide = 5-[(5-phospho-1-deoxy-D-ribulos-1-ylimino)methylamino]-1-(5-phospho-beta-D-ribosyl)imidazole-4-carboxamide. It functions in the pathway amino-acid biosynthesis; L-histidine biosynthesis; L-histidine from 5-phospho-alpha-D-ribose 1-diphosphate: step 4/9. The chain is 1-(5-phosphoribosyl)-5-[(5-phosphoribosylamino)methylideneamino] imidazole-4-carboxamide isomerase from Salmonella enteritidis PT4 (strain P125109).